We begin with the raw amino-acid sequence, 303 residues long: 2-dehydropantoate 2-reductase (303 aa).

NADP(+) is bound by residues 7–12 (GCGALG), Asn98, and Ala122. Position 98 (Asn98) interacts with substrate. Lys176 serves as the catalytic Proton donor. 4 residues coordinate substrate: Asn180, Asn184, Asn194, and Ser244. Residue Glu256 participates in NADP(+) binding.

This sequence belongs to the ketopantoate reductase family. As to quaternary structure, monomer.

It localises to the cytoplasm. It catalyses the reaction (R)-pantoate + NADP(+) = 2-dehydropantoate + NADPH + H(+). Its pathway is cofactor biosynthesis; (R)-pantothenate biosynthesis; (R)-pantoate from 3-methyl-2-oxobutanoate: step 2/2. Functionally, catalyzes the NADPH-dependent reduction of ketopantoate into pantoic acid. Has a strong preference for NADPH over NADH as the electron acceptor. Pantoate, ketoisovalerate, oxaloacetate, pyruvate, 3-hydroxypyruvate, alpha-ketoglutarate, alpha-ketobutyrate, and acetaldehyde cannot serve as substrates for reduction. This is 2-dehydropantoate 2-reductase from Salmonella typhimurium (strain LT2 / SGSC1412 / ATCC 700720).